Consider the following 288-residue polypeptide: Oxaloacetate decarboxylase (288 aa).

Serine 47 contributes to the substrate binding site. Aspartate 85 is a Mg(2+) binding site. 2 residues coordinate substrate: arginine 156 and histidine 232.

Belongs to the isocitrate lyase/PEP mutase superfamily. Oxaloacetate decarboxylase family. Homotetramer; dimer of dimers. Mg(2+) serves as cofactor.

It catalyses the reaction oxaloacetate + H(+) = pyruvate + CO2. Its function is as follows. Catalyzes the decarboxylation of oxaloacetate into pyruvate. Seems to play a role in maintaining cellular concentrations of bicarbonate and pyruvate. The sequence is that of Oxaloacetate decarboxylase from Rhodopseudomonas palustris (strain TIE-1).